A 138-amino-acid polypeptide reads, in one-letter code: Large ribosomal subunit protein uL16 (138 aa).

Residues 1 to 13 are compositionally biased toward basic residues; sequence MLQPKRRKYRKEQ. The segment at 1–24 is disordered; the sequence is MLQPKRRKYRKEQKGRNTGKATRG.

This sequence belongs to the universal ribosomal protein uL16 family. As to quaternary structure, part of the 50S ribosomal subunit.

Binds 23S rRNA and is also seen to make contacts with the A and possibly P site tRNAs. This chain is Large ribosomal subunit protein uL16, found in Burkholderia multivorans (strain ATCC 17616 / 249).